The chain runs to 279 residues: Tryptophan 2,3-dioxygenase (279 aa).

Substrate contacts are provided by residues 48–52 (FIVIH), Y110, and R114. H237 lines the heme pocket. T251 contributes to the substrate binding site.

The protein belongs to the tryptophan 2,3-dioxygenase family. As to quaternary structure, homotetramer. The cofactor is heme.

The catalysed reaction is L-tryptophan + O2 = N-formyl-L-kynurenine. It functions in the pathway amino-acid degradation; L-tryptophan degradation via kynurenine pathway; L-kynurenine from L-tryptophan: step 1/2. Its function is as follows. Heme-dependent dioxygenase that catalyzes the oxidative cleavage of the L-tryptophan (L-Trp) pyrrole ring and converts L-tryptophan to N-formyl-L-kynurenine. Catalyzes the oxidative cleavage of the indole moiety. This Bacillus thuringiensis subsp. konkukian (strain 97-27) protein is Tryptophan 2,3-dioxygenase.